A 503-amino-acid chain; its full sequence is Glycerol kinase (503 aa).

Thr-14 contacts ADP. Residues Thr-14, Thr-15, and Ser-16 each contribute to the ATP site. Thr-14 contacts sn-glycerol 3-phosphate. Arg-18 lines the ADP pocket. The sn-glycerol 3-phosphate site is built by Arg-84, Glu-85, Tyr-136, and Asp-246. Arg-84, Glu-85, Tyr-136, Asp-246, and Gln-247 together coordinate glycerol. 2 residues coordinate ADP: Thr-268 and Gly-311. Residues Thr-268, Gly-311, Gln-315, and Gly-412 each coordinate ATP. Positions 412 and 416 each coordinate ADP.

Belongs to the FGGY kinase family.

It catalyses the reaction glycerol + ATP = sn-glycerol 3-phosphate + ADP + H(+). The protein operates within polyol metabolism; glycerol degradation via glycerol kinase pathway; sn-glycerol 3-phosphate from glycerol: step 1/1. Inhibited by fructose 1,6-bisphosphate (FBP). Its function is as follows. Key enzyme in the regulation of glycerol uptake and metabolism. Catalyzes the phosphorylation of glycerol to yield sn-glycerol 3-phosphate. This is Glycerol kinase from Haemophilus influenzae (strain PittGG).